A 96-amino-acid polypeptide reads, in one-letter code: Acylphosphatase (96 aa).

The 88-residue stretch at Cys-9 to Arg-96 folds into the Acylphosphatase-like domain. Residues Arg-24 and Asn-42 contribute to the active site.

The protein belongs to the acylphosphatase family.

It carries out the reaction an acyl phosphate + H2O = a carboxylate + phosphate + H(+). This Methanococcoides burtonii (strain DSM 6242 / NBRC 107633 / OCM 468 / ACE-M) protein is Acylphosphatase (acyP).